Here is a 116-residue protein sequence, read N- to C-terminus: MPAPRTICSLLLLSMLWMDLAMAGSSFLSPEHQKLQRKEPKKPSGRLKPRALEGQFDPDVGSQEEGAEDELEIRFNAPFNIGIKLSGAQSLQHGQTLGKFLQDILWEEAEETLADE.

The N-terminal stretch at 1–23 is a signal peptide; it reads MPAPRTICSLLLLSMLWMDLAMA. S26 is lipidated: O-decanoyl serine; alternate. S26 carries the O-hexanoyl serine; alternate lipid modification. S26 is lipidated: O-octanoyl serine; alternate. Residues 29–67 are disordered; it reads SPEHQKLQRKEPKKPSGRLKPRALEGQFDPDVGSQEEGA. Residues 31-42 show a composition bias toward basic and acidic residues; it reads EHQKLQRKEPKK. Residues 51–74 constitute a propeptide, removed in mature form; sequence ALEGQFDPDVGSQEEGAEDELEIR. Position 97 is a leucine amide (L97). The propeptide at 98-116 is removed in mature form; the sequence is GKFLQDILWEEAEETLADE.

This sequence belongs to the motilin family. Post-translationally, O-octanoylated by GOAT/MBOAT4. O-octanoylation is essential for ghrelin activity. In terms of processing, amidation of Leu-97 is essential for obestatin activity.

The protein resides in the secreted. Functionally, ghrelin is the ligand for growth hormone secretagogue receptor type 1 (GHSR). Induces the release of growth hormone from the pituitary. Has an appetite-stimulating effect, induces adiposity and stimulates gastric acid secretion. Involved in growth regulation. In terms of biological role, obestatin may be the ligand for GPR39. May have an appetite-reducing effect resulting in decreased food intake. May reduce gastric emptying activity and jejunal motility. This chain is Appetite-regulating hormone (GHRL), found in Capra hircus (Goat).